A 290-amino-acid polypeptide reads, in one-letter code: Bifunctional protein FolD (290 aa).

Residues 169–171 (GAS), Ile194, and Ile235 each bind NADP(+).

It belongs to the tetrahydrofolate dehydrogenase/cyclohydrolase family. As to quaternary structure, homodimer.

It carries out the reaction (6R)-5,10-methylene-5,6,7,8-tetrahydrofolate + NADP(+) = (6R)-5,10-methenyltetrahydrofolate + NADPH. It catalyses the reaction (6R)-5,10-methenyltetrahydrofolate + H2O = (6R)-10-formyltetrahydrofolate + H(+). It participates in one-carbon metabolism; tetrahydrofolate interconversion. Functionally, catalyzes the oxidation of 5,10-methylenetetrahydrofolate to 5,10-methenyltetrahydrofolate and then the hydrolysis of 5,10-methenyltetrahydrofolate to 10-formyltetrahydrofolate. This chain is Bifunctional protein FolD, found in Helicobacter pylori (strain J99 / ATCC 700824) (Campylobacter pylori J99).